The following is a 145-amino-acid chain: 3-hydroxyacyl-[acyl-carrier-protein] dehydratase FabZ (145 aa).

His49 is a catalytic residue.

This sequence belongs to the thioester dehydratase family. FabZ subfamily.

It localises to the cytoplasm. The enzyme catalyses a (3R)-hydroxyacyl-[ACP] = a (2E)-enoyl-[ACP] + H2O. In terms of biological role, involved in unsaturated fatty acids biosynthesis. Catalyzes the dehydration of short chain beta-hydroxyacyl-ACPs and long chain saturated and unsaturated beta-hydroxyacyl-ACPs. This is 3-hydroxyacyl-[acyl-carrier-protein] dehydratase FabZ from Rickettsia bellii (strain OSU 85-389).